We begin with the raw amino-acid sequence, 742 residues long: Dynein axonemal intermediate chain 4 (742 aa).

WD repeat units follow at residues 462-502 (HCEC…DFPV), 511-559 (KHTS…DCND), 631-671 (GHKG…PILT), and 674-713 (NTTNAVYDIMWSPSSALMFGAVSENRVEIWDLGVSIIDPV).

Part of the multisubunit axonemal dynein complex formed at least of two heavy chains and a number of intermediate and light chains. Associated with axonemal dynein subunits such as, DNAH2, DNAI3, and DYNLT1.

The protein localises to the cytoplasm. It localises to the cytoskeleton. Its subcellular location is the flagellum axoneme. It is found in the cilium axoneme. The protein resides in the dynein axonemal particle. Functionally, plays a critical role in the assembly of axonemal dynein complex, thereby playing a role in ciliary motility. The polypeptide is Dynein axonemal intermediate chain 4 (Xenopus laevis (African clawed frog)).